The sequence spans 95 residues: Defensin-like protein 232 (95 aa).

A signal peptide spans 1–26 (MRCTTLIMVSFVVSCLLLSLVEESEA). 4 disulfides stabilise this stretch: Cys33–Cys94, Cys43–Cys68, Cys51–Cys84, and Cys66–Cys86.

The protein belongs to the DEFL family. Flower buds.

Its subcellular location is the secreted. The protein is Defensin-like protein 232 (SCRL23) of Arabidopsis thaliana (Mouse-ear cress).